A 298-amino-acid chain; its full sequence is Tyrosine recombinase XerC (298 aa).

The region spanning 1–85 (MQQQLDAYCA…AVRGLYHYLN (85 aa)) is the Core-binding (CB) domain. The region spanning 106-285 (RLPKTLDTDR…DFQHLAAVYD (180 aa)) is the Tyr recombinase domain. Residues Arg146, Lys170, His237, Arg240, and His263 contribute to the active site. The active-site O-(3'-phospho-DNA)-tyrosine intermediate is Tyr272.

It belongs to the 'phage' integrase family. XerC subfamily. Forms a cyclic heterotetrameric complex composed of two molecules of XerC and two molecules of XerD.

It is found in the cytoplasm. In terms of biological role, site-specific tyrosine recombinase, which acts by catalyzing the cutting and rejoining of the recombining DNA molecules. The XerC-XerD complex is essential to convert dimers of the bacterial chromosome into monomers to permit their segregation at cell division. It also contributes to the segregational stability of plasmids. The chain is Tyrosine recombinase XerC from Pseudomonas fluorescens (strain ATCC BAA-477 / NRRL B-23932 / Pf-5).